A 189-amino-acid polypeptide reads, in one-letter code: Interferon alpha-5 (189 aa).

The first 23 residues, 1–23 (MARLCAFLMVLPVLSYWPTCSLG), serve as a signal peptide directing secretion. Intrachain disulfides connect C24–C122 and C52–C162. N101 is a glycosylation site (N-linked (GlcNAc...) asparagine).

Belongs to the alpha/beta interferon family.

Its subcellular location is the secreted. Its function is as follows. Produced by macrophages, IFN-alpha have antiviral activities. Interferon stimulates the production of two enzymes: a protein kinase and an oligoadenylate synthetase. This Mus musculus (Mouse) protein is Interferon alpha-5 (Ifna5).